A 316-amino-acid polypeptide reads, in one-letter code: MHKSHLDSVAPQLRSDLQCIKASSSSLCDQMECMLRVLQDFKRSSPPPSPDIEKPCVVPPRRAPRRDNRISHRTSDLSEADSACCMDLPSDVSPGSCGQRGLEWDSGYSEVSGGSLRGEEDDIVEEESETSVPTVVLRRLPTPSCQRLSSGGFLNSRQGRIRPKSTSDVCLEQWRGIGLGSDSQDWTGCLLSQSRSRQPLVLGDNSFADLVKQWMDLPENVDEEGRRVRDGGRWLHKPHGFLISLSGNVKRRLGNMSRLRRSEQEAVKRMSCPQLGCRPLSLYYHQSLSDIAEASTNLLHCRSRQPIICNEGAGFL.

Disordered stretches follow at residues 43–74 (RSSPPPSPDIEKPCVVPPRRAPRRDNRISHRT) and 108–130 (YSEVSGGSLRGEEDDIVEEESET). Residues 65 to 74 (RRDNRISHRT) show a composition bias toward basic and acidic residues. The span at 119–129 (EEDDIVEEESE) shows a compositional bias: acidic residues. Positions 182 to 219 (DSQDWTGCLLSQSRSRQPLVLGDNSFADLVKQWMDLPE) are inka box.

It belongs to the INKA family.

The protein resides in the nucleus. Inhibitor of the serine/threonine-protein kinase pak4/pak5. Acts by binding pak4/pak5 in a substrate-like manner, inhibiting the protein kinase activity. The chain is PAK4-inhibitor inka2 from Xenopus laevis (African clawed frog).